The following is a 166-amino-acid chain: Ureidoglycolate lyase (166 aa).

This sequence belongs to the ureidoglycolate lyase family. Homodimer. It depends on Ni(2+) as a cofactor.

It catalyses the reaction (S)-ureidoglycolate = urea + glyoxylate. It functions in the pathway nitrogen metabolism; (S)-allantoin degradation. Its function is as follows. Catalyzes the catabolism of the allantoin degradation intermediate (S)-ureidoglycolate, generating urea and glyoxylate. Involved in the utilization of allantoin as nitrogen source. The polypeptide is Ureidoglycolate lyase (Rhizobium etli (strain ATCC 51251 / DSM 11541 / JCM 21823 / NBRC 15573 / CFN 42)).